Reading from the N-terminus, the 230-residue chain is Cytidylate kinase (230 aa).

Gly10–Thr18 is an ATP binding site.

This sequence belongs to the cytidylate kinase family. Type 1 subfamily.

It is found in the cytoplasm. It carries out the reaction CMP + ATP = CDP + ADP. The enzyme catalyses dCMP + ATP = dCDP + ADP. The polypeptide is Cytidylate kinase (Leptospira borgpetersenii serovar Hardjo-bovis (strain JB197)).